The chain runs to 601 residues: Elongation factor 4 (601 aa).

Positions 7 to 189 (SNIRNFSIVA…AIVHRLPPPQ (183 aa)) constitute a tr-type G domain. GTP is bound by residues 19–24 (DHGKST) and 136–139 (NKVD).

This sequence belongs to the TRAFAC class translation factor GTPase superfamily. Classic translation factor GTPase family. LepA subfamily.

The protein resides in the cell inner membrane. The catalysed reaction is GTP + H2O = GDP + phosphate + H(+). Its function is as follows. Required for accurate and efficient protein synthesis under certain stress conditions. May act as a fidelity factor of the translation reaction, by catalyzing a one-codon backward translocation of tRNAs on improperly translocated ribosomes. Back-translocation proceeds from a post-translocation (POST) complex to a pre-translocation (PRE) complex, thus giving elongation factor G a second chance to translocate the tRNAs correctly. Binds to ribosomes in a GTP-dependent manner. The protein is Elongation factor 4 of Rhodopseudomonas palustris (strain BisB18).